The chain runs to 310 residues: Ribosomal RNA small subunit methyltransferase H (310 aa).

S-adenosyl-L-methionine is bound by residues 33–35 (AGH), Asp53, Phe79, Asp100, and Gln107.

The protein belongs to the methyltransferase superfamily. RsmH family.

It localises to the cytoplasm. It carries out the reaction cytidine(1402) in 16S rRNA + S-adenosyl-L-methionine = N(4)-methylcytidine(1402) in 16S rRNA + S-adenosyl-L-homocysteine + H(+). In terms of biological role, specifically methylates the N4 position of cytidine in position 1402 (C1402) of 16S rRNA. The protein is Ribosomal RNA small subunit methyltransferase H of Clostridium perfringens (strain 13 / Type A).